The primary structure comprises 484 residues: MTGILVAGTSSDAGKSLVVTALCRVARRRGVDVVPFKAQNMSNNSMVCADGSEIGRAQYLQATAAGVTPTSAMNPVLLKPGTDRRSFVVLRGKPGGVLEAGEYTTGRRYLAEAAWAAYDELAASHDMVICEGAGSPAEINLRRGDYTNMGLARAKNLPVVLVGDIDRGGVLASLFGTWALLDDDDRALLAGYIVNKFRGDDAILAPGLEEITDRTGMPSFGVLPWVPGVWLDGEDALEVGRWRHEGDAVDPSSLRVAVVRFPRISNATDVDAMAGETGVDVQVTTNPDTCQAADVLVLPGSRSTVSDLEWLRRSGIADVVARRAEQGRTVVGICGGYQMLCRTILDPDGQETTPGSVVEGLGLLPVEVDFAATKTLALSHGTWRGIEVGGYEIHHGVCRSLEDAEAFLDGVHVGPVWGTMWHGAFEHDEFRRTWLADAARHAGSSWRPHSDELGYQARREAMIETLADALEAHVDVDRILHLVR.

Positions 253 to 430 (SLRVAVVRFP…WHGAFEHDEF (178 aa)) constitute a GATase cobBQ-type domain. Cysteine 334 functions as the Nucleophile in the catalytic mechanism. Histidine 422 is an active-site residue.

Belongs to the CobB/CobQ family. CobQ subfamily.

Its pathway is cofactor biosynthesis; adenosylcobalamin biosynthesis. Its function is as follows. Catalyzes amidations at positions B, D, E, and G on adenosylcobyrinic A,C-diamide. NH(2) groups are provided by glutamine, and one molecule of ATP is hydrogenolyzed for each amidation. The sequence is that of Cobyric acid synthase from Cutibacterium acnes (strain DSM 16379 / KPA171202) (Propionibacterium acnes).